A 181-amino-acid chain; its full sequence is Protein CRABS CLAW (181 aa).

A C4-type zinc finger spans residues 26–53 (CSICNTILAVGIPLKRMLDTVTVKCGHC). The disordered stretch occupies residues 80-122 (GSDYKKGSSSSSSSSTSSDQPPSPSPPFVVKPPEKKQRLPSAY). Over residues 87–99 (SSSSSSSSTSSDQ) the composition is skewed to low complexity. Residues 100 to 109 (PPSPSPPFVV) show a composition bias toward pro residues.

This sequence belongs to the YABBY family. In terms of tissue distribution, restricted to flowers, mostly in carpels and nectaries. Expressed at low levels in sepal primordia (buds), sepal receptacle and developing petal. Not detected in placental tissues, septum, stigma and ovules.

It is found in the nucleus. Functionally, transcription factor required for the initiation of nectary development. Also involved in suppressing early radial growth of the gynoecium, in promoting its later elongation and in fusion of its carpels by regulating both cell division and expansion. Establishes the polar differentiation in the carpels by specifying abaxial cell fate in the ovary wall. Regulates both cell division and expansion. In Arabidopsis thaliana (Mouse-ear cress), this protein is Protein CRABS CLAW.